The following is a 758-amino-acid chain: Calcium up-regulated protein E (758 aa).

A disordered region spans residues 1-22; it reads MINIEDISKSSNQSEEKQLKST. Ricin B-type lectin domains follow at residues 25–145 and 156–288; these read KPKY…WTTF and GYFQ…WIAN.

Belongs to the cup family.

It localises to the cytoplasm. Its subcellular location is the membrane. May play an important role in stabilizing and/or regulating the cell membrane during Ca(2+) stress or certain stages of development. The chain is Calcium up-regulated protein E (cupE) from Dictyostelium discoideum (Social amoeba).